A 290-amino-acid chain; its full sequence is Thymidylate synthase (290 aa).

DUMP is bound at residue Arg31. His61 contributes to the (6R)-5,10-methylene-5,6,7,8-tetrahydrofolate binding site. Arg152 to Arg153 lines the dUMP pocket. Cys172 serves as the catalytic Nucleophile. DUMP is bound by residues Arg192–Asp195, Asn203, and His233–Tyr235. A (6R)-5,10-methylene-5,6,7,8-tetrahydrofolate-binding site is contributed by Asp195. Ala289 contributes to the (6R)-5,10-methylene-5,6,7,8-tetrahydrofolate binding site.

Belongs to the thymidylate synthase family. Bacterial-type ThyA subfamily. As to quaternary structure, homodimer.

The protein localises to the cytoplasm. It carries out the reaction dUMP + (6R)-5,10-methylene-5,6,7,8-tetrahydrofolate = 7,8-dihydrofolate + dTMP. It participates in pyrimidine metabolism; dTTP biosynthesis. In terms of biological role, catalyzes the reductive methylation of 2'-deoxyuridine-5'-monophosphate (dUMP) to 2'-deoxythymidine-5'-monophosphate (dTMP) while utilizing 5,10-methylenetetrahydrofolate (mTHF) as the methyl donor and reductant in the reaction, yielding dihydrofolate (DHF) as a by-product. This enzymatic reaction provides an intracellular de novo source of dTMP, an essential precursor for DNA biosynthesis. This is Thymidylate synthase from Psychrobacter cryohalolentis (strain ATCC BAA-1226 / DSM 17306 / VKM B-2378 / K5).